The following is a 599-amino-acid chain: MKNIRNFSIIAHIDHGKSTLSDRIIQICGGLSDREMEAQVLDSMDLERERGITIKAQSVTLDYKASDGETYQLNFIDTPGHVDFSYEVSRSLAACEGALLVVDAGQGVEAQTLANCYTAIEMDLEVVPVLNKIDLPAADPERVAEEIEDIVGIDATDAVRCSAKTGVGVQDVLERLVRDIPPPEGDPDAPLQALIIDSWFDNYLGVVSLIRVKNGTLRKGDKVKVMSTGQTYNADRLGIFTPKQIDRTELKCGEVGWLVCAIKDILGAPVGDTLTLARNPAEKALPGFKKVKPQVYAGLFPVSSDDYESFRDALGKLSLNDASLFYEPESSTALGFGFRCGFLGLLHMEIIQERLEREYDLDLITTAPTVVYEVQMTNNEVVYVDSPSKLPPLNNIQELREPIAECHMLLPQEYLGNVITLCVEKRGVQTNMVYHGNQVALTYEIPMAEVVLDFFDRLKSTSRGYASLDYNFKRFQASNMVRVDVLINGERVDALALITHNDNAPYRGRELVEKMKDLIPRQQFDIAIQAAIGNHIIARSTVKQLRKNVLAKCYGGDVSRKKKLLQKQKEGKKRMKQVGNVELPQEAFLAILHVGKDGK.

Residues 2 to 184 (KNIRNFSIIA…RLVRDIPPPE (183 aa)) enclose the tr-type G domain. GTP-binding positions include 14–19 (DHGKST) and 131–134 (NKID).

Belongs to the TRAFAC class translation factor GTPase superfamily. Classic translation factor GTPase family. LepA subfamily.

The protein localises to the cell inner membrane. It catalyses the reaction GTP + H2O = GDP + phosphate + H(+). Functionally, required for accurate and efficient protein synthesis under certain stress conditions. May act as a fidelity factor of the translation reaction, by catalyzing a one-codon backward translocation of tRNAs on improperly translocated ribosomes. Back-translocation proceeds from a post-translocation (POST) complex to a pre-translocation (PRE) complex, thus giving elongation factor G a second chance to translocate the tRNAs correctly. Binds to ribosomes in a GTP-dependent manner. This Cronobacter sakazakii (strain ATCC BAA-894) (Enterobacter sakazakii) protein is Elongation factor 4.